We begin with the raw amino-acid sequence, 470 residues long: D-serine/D-alanine/glycine transporter (470 aa).

The next 12 helical transmembrane spans lie at 30–50, 51–71, 102–122, 137–157, 162–182, 211–231, 256–276, 283–303, 350–370, 371–391, 413–433, and 441–461; these read LIAI…KTIS, LAGP…FFVM, FTGW…VVAI, VASL…VKMF, FWFA…GLVM, LSGF…IELV, IIMF…WSSV, FVEL…NFVV, FSCI…SVIG, AFTM…TIIL, PLGK…VVLL, and QALL…LFIG.

Belongs to the amino acid-polyamine-organocation (APC) superfamily. Amino acid transporter (AAT) (TC 2.A.3.1) family.

It is found in the cell inner membrane. The enzyme catalyses D-alanine(in) + H(+)(in) = D-alanine(out) + H(+)(out). It carries out the reaction D-serine(out) + H(+)(out) = D-serine(in) + H(+)(in). It catalyses the reaction glycine(in) + H(+)(in) = glycine(out) + H(+)(out). Functionally, permease that is involved in the transport across the cytoplasmic membrane of D-alanine, D-serine and glycine. The chain is D-serine/D-alanine/glycine transporter (cycA) from Escherichia coli O157:H7.